A 1193-amino-acid polypeptide reads, in one-letter code: Structural maintenance of chromosomes protein 3 homolog (1193 aa).

An ATP-binding site is contributed by 31–38; the sequence is GFNGSGKS. Lysine 101 carries the post-translational modification N6-acetyllysine. 2 coiled-coil regions span residues 179–286 and 332–483; these read SKKV…LNKT and ILRV…EIIK. Positions 505 to 631 constitute an SMC hinge domain; that stretch reads ENILGFLIDN…VKSLESCENY (127 aa). Positions 665 to 993 form a coiled coil; it reads TVYNKLKELK…SHKNIKDMIQ (329 aa).

Belongs to the SMC family. SMC3 subfamily. Component of the cohesin complex. In terms of processing, acetylation at Lys-101 by ESCO1 is important for genome stability and S phase sister chromatid cohesion.

Its subcellular location is the nucleus. Its function is as follows. Central component of cohesin, a complex required for chromosome cohesion during the cell cycle. The cohesin complex may form a large proteinaceous ring within which sister chromatids can be trapped. At anaphase, the complex is cleaved and dissociates from chromatin, allowing sister chromatids to segregate. Cohesion is coupled to DNA replication and is involved in DNA repair. The cohesin complex also plays an important role in spindle pole assembly during mitosis and in chromosomes movement. The protein is Structural maintenance of chromosomes protein 3 homolog of Plasmodium falciparum (isolate 3D7).